Consider the following 302-residue polypeptide: Nucleotide-binding protein Bamb_2855 (302 aa).

Position 8-15 (8-15 (GISGSGKS)) interacts with ATP. 57 to 60 (DARS) is a GTP binding site.

Belongs to the RapZ-like family.

Its function is as follows. Displays ATPase and GTPase activities. In Burkholderia ambifaria (strain ATCC BAA-244 / DSM 16087 / CCUG 44356 / LMG 19182 / AMMD) (Burkholderia cepacia (strain AMMD)), this protein is Nucleotide-binding protein Bamb_2855.